A 296-amino-acid polypeptide reads, in one-letter code: 4-hydroxybenzoate octaprenyltransferase (296 aa).

The next 8 helical transmembrane spans lie at 28 to 48, 51 to 71, 102 to 122, 143 to 163, 174 to 194, 212 to 232, 233 to 253, and 274 to 294; these read IGTLLLLWPTYWALWLASDGI, LAVLAAFTIGTFLMRSAGCVI, LLLTAFLCLLAALCLIPLNHL, FFPIPQFYLGFAFSFGIPMAF, AWILFAANVLWTLAYDTVYAM, FGRYDIAAVMLCHGGFTLLMA, VLGAVIGAAWAYWTAIPIVLL, and FLANNRIGWVWFAAIFAHTFF.

This sequence belongs to the UbiA prenyltransferase family. The cofactor is Mg(2+).

It is found in the cell inner membrane. The enzyme catalyses all-trans-octaprenyl diphosphate + 4-hydroxybenzoate = 4-hydroxy-3-(all-trans-octaprenyl)benzoate + diphosphate. The protein operates within cofactor biosynthesis; ubiquinone biosynthesis. In terms of biological role, catalyzes the prenylation of para-hydroxybenzoate (PHB) with an all-trans polyprenyl group. Mediates the second step in the final reaction sequence of ubiquinone-8 (UQ-8) biosynthesis, which is the condensation of the polyisoprenoid side chain with PHB, generating the first membrane-bound Q intermediate 3-octaprenyl-4-hydroxybenzoate. The polypeptide is 4-hydroxybenzoate octaprenyltransferase (Neisseria gonorrhoeae (strain ATCC 700825 / FA 1090)).